Consider the following 112-residue polypeptide: Nitrogenase iron-iron protein delta chain (112 aa).

In terms of assembly, hexamer of two alpha, two beta, and two delta chains. Requires iron-sulfur cluster as cofactor.

It catalyses the reaction N2 + 8 reduced [2Fe-2S]-[ferredoxin] + 16 ATP + 16 H2O = H2 + 8 oxidized [2Fe-2S]-[ferredoxin] + 2 NH4(+) + 16 ADP + 16 phosphate + 6 H(+). Its function is as follows. The key enzymatic reactions in nitrogen fixation are catalyzed by the nitrogenase complex, which has 2 components: the iron protein (component 2) and a component 1 which is either a molybdenum-iron protein, a vanadium-iron, or an iron-iron protein. The sequence is that of Nitrogenase iron-iron protein delta chain (anfG) from Azomonas macrocytogenes (Azotobacter macrocytogenes).